The primary structure comprises 447 residues: Phosphoglucosamine mutase (447 aa).

Ser88 acts as the Phosphoserine intermediate in catalysis. Mg(2+) contacts are provided by Ser88, Asp231, Asp233, and Asp235. At Ser88 the chain carries Phosphoserine.

The protein belongs to the phosphohexose mutase family. As to quaternary structure, monomer. Also forms large aggregates. It depends on Mg(2+) as a cofactor. In terms of processing, activated by phosphorylation. Glucose-1,6-bisphosphate or fructose-1,6-bisphosphate can activate the enzyme in vitro. However, since glucose-1,6-bisphosphate is not believed to form in methanogens, the physiologically relevant activator might be a serine kinase protein.

The enzyme catalyses alpha-D-glucosamine 1-phosphate = D-glucosamine 6-phosphate. In terms of biological role, catalyzes the conversion of glucosamine-6-phosphate to glucosamine-1-phosphate. Also catalyzes the isomerization of glucose-1-phosphate to glucose-6-phosphate, but at a 5-fold lower rate. This is Phosphoglucosamine mutase (glmM) from Methanococcus maripaludis (strain DSM 14266 / JCM 13030 / NBRC 101832 / S2 / LL).